The sequence spans 185 residues: Elongation factor P (185 aa).

It belongs to the elongation factor P family.

Its subcellular location is the cytoplasm. The protein operates within protein biosynthesis; polypeptide chain elongation. Involved in peptide bond synthesis. Stimulates efficient translation and peptide-bond synthesis on native or reconstituted 70S ribosomes in vitro. Probably functions indirectly by altering the affinity of the ribosome for aminoacyl-tRNA, thus increasing their reactivity as acceptors for peptidyl transferase. The sequence is that of Elongation factor P from Pelotomaculum thermopropionicum (strain DSM 13744 / JCM 10971 / SI).